The sequence spans 202 residues: Small ribosomal subunit protein uS4c (202 aa).

Residues 90 to 150 (MRLDNVIFRL…NQRKSQAIIN (61 aa)) form the S4 RNA-binding domain.

It belongs to the universal ribosomal protein uS4 family. As to quaternary structure, part of the 30S ribosomal subunit. Contacts protein S5. The interaction surface between S4 and S5 is involved in control of translational fidelity.

The protein localises to the plastid. The protein resides in the chloroplast. In terms of biological role, one of the primary rRNA binding proteins, it binds directly to 16S rRNA where it nucleates assembly of the body of the 30S subunit. With S5 and S12 plays an important role in translational accuracy. The protein is Small ribosomal subunit protein uS4c (rps4) of Canalohypopterygium tamariscinum (Moss).